The sequence spans 255 residues: NAD kinase (255 aa).

Asp-44 serves as the catalytic Proton acceptor. NAD(+) is bound by residues 44–45 (DG), His-49, 114–115 (NE), Asp-144, Ala-152, 155–160 (SAYNLS), and Gln-216.

This sequence belongs to the NAD kinase family. It depends on a divalent metal cation as a cofactor.

Its subcellular location is the cytoplasm. It catalyses the reaction NAD(+) + ATP = ADP + NADP(+) + H(+). In terms of biological role, involved in the regulation of the intracellular balance of NAD and NADP, and is a key enzyme in the biosynthesis of NADP. Catalyzes specifically the phosphorylation on 2'-hydroxyl of the adenosine moiety of NAD to yield NADP. The chain is NAD kinase from Rickettsia canadensis (strain McKiel).